The following is a 340-amino-acid chain: Phosphoribosylformylglycinamidine cyclo-ligase (340 aa).

It belongs to the AIR synthase family.

The protein localises to the cytoplasm. It catalyses the reaction 2-formamido-N(1)-(5-O-phospho-beta-D-ribosyl)acetamidine + ATP = 5-amino-1-(5-phospho-beta-D-ribosyl)imidazole + ADP + phosphate + H(+). Its pathway is purine metabolism; IMP biosynthesis via de novo pathway; 5-amino-1-(5-phospho-D-ribosyl)imidazole from N(2)-formyl-N(1)-(5-phospho-D-ribosyl)glycinamide: step 2/2. The protein is Phosphoribosylformylglycinamidine cyclo-ligase of Streptococcus sanguinis (strain SK36).